Here is a 303-residue protein sequence, read N- to C-terminus: Putative deoxyribose-phosphate aldolase (303 aa).

The active-site Proton donor/acceptor is aspartate 157. Lysine 220 serves as the catalytic Schiff-base intermediate with acetaldehyde. Lysine 256 (proton donor/acceptor) is an active-site residue.

This sequence belongs to the DeoC/FbaB aldolase family. DeoC type 2 subfamily.

It catalyses the reaction 2-deoxy-D-ribose 5-phosphate = D-glyceraldehyde 3-phosphate + acetaldehyde. It participates in carbohydrate degradation; 2-deoxy-D-ribose 1-phosphate degradation; D-glyceraldehyde 3-phosphate and acetaldehyde from 2-deoxy-alpha-D-ribose 1-phosphate: step 2/2. Its function is as follows. Catalyzes a reversible aldol reaction between acetaldehyde and D-glyceraldehyde 3-phosphate to generate 2-deoxy-D-ribose 5-phosphate. The polypeptide is Putative deoxyribose-phosphate aldolase (Caenorhabditis elegans).